Consider the following 203-residue polypeptide: ATP-dependent Clp protease proteolytic subunit (203 aa).

The active-site Nucleophile is S100. The active site involves H125.

This sequence belongs to the peptidase S14 family. In terms of assembly, fourteen ClpP subunits assemble into 2 heptameric rings which stack back to back to give a disk-like structure with a central cavity, resembling the structure of eukaryotic proteasomes.

It localises to the cytoplasm. It catalyses the reaction Hydrolysis of proteins to small peptides in the presence of ATP and magnesium. alpha-casein is the usual test substrate. In the absence of ATP, only oligopeptides shorter than five residues are hydrolyzed (such as succinyl-Leu-Tyr-|-NHMec, and Leu-Tyr-Leu-|-Tyr-Trp, in which cleavage of the -Tyr-|-Leu- and -Tyr-|-Trp bonds also occurs).. In terms of biological role, cleaves peptides in various proteins in a process that requires ATP hydrolysis. Has a chymotrypsin-like activity. Plays a major role in the degradation of misfolded proteins. The sequence is that of ATP-dependent Clp protease proteolytic subunit from Anaeromyxobacter dehalogenans (strain 2CP-1 / ATCC BAA-258).